A 396-amino-acid polypeptide reads, in one-letter code: Histidine-rich glycoprotein (396 aa).

Cystatin domains lie at 1–102 (AVNP…SALT) and 103–169 (NMRA…RFSA). 6 disulfides stabilise this stretch: cysteine 7-cysteine 375, cysteine 56-cysteine 67, cysteine 77-cysteine 92, cysteine 123-cysteine 297, cysteine 137-cysteine 160, and cysteine 212-cysteine 242. A glycan (N-linked (GlcNAc...) asparagine; partial) is linked at asparagine 70. Asparagine 91 and asparagine 122 each carry an N-linked (GlcNAc...) asparagine glycan. Residues 176 to 322 (RPFHSGEHEH…GPGKGHFRFH (147 aa)) form a disordered region. The segment covering 197-208 (GSKDHGHPHESY) has biased composition (basic and acidic residues). An N-linked (GlcNAc...) asparagine glycan is attached at asparagine 220. Positions 233 to 246 (LPFPPPGLRCPHPP) are enriched in pro residues. Basic and acidic residues predominate over residues 255-265 (PPHDHSSDEHH). Basic residues predominate over residues 266 to 284 (PHGHHPHGHHPHGHHPHGH). Over residues 285 to 296 (HPPDNDFYDHGP) the composition is skewed to basic and acidic residues. Residues 304–322 (PPPRHSKERGPGKGHFRFH) are compositionally biased toward basic residues. At serine 309 the chain carries Phosphoserine.

As to quaternary structure, interacts (via the HRR domain) with TPM1; the interaction appears to contribute to the antiangiogenic properties of the HRR domain. Interacts with THBS1 (via the TSP type I repeats); the interaction blocks the antiangiogenic effect of THBS1 with CD36. Interacts with PLG (via its Kringle domains); the interaction tethers PLG to the cell surface and enhances its activation. Interacts with THBS2; the interaction blocks the antiangiogenic effect of THBS2 with CD36. Interacts with HPSE; the interaction is enhanced at acidic pH, partially inhibits binding of HPSE to cell surface receptors and modulates its enzymatic activity. Interacts (via the HRR domain) with TMP1; the interaction partially mediates the antiangiogenic properties of HRG. Interacts with kappa and lambda light chains of IgG molecules. Interacts with ATP5F1A; the interaction occurs on the surface of T-cells and alters their cell morphology in concert with CONA. Binds IgG molecules containing kappa and lambda light chains and inhibits the formation of insoluble immunoglobulin complexes. Interacts with F12; the interaction, which is enhanced in the presence of zinc ions and inhibited by heparin-binding to HRG, inhibits factor XII autoactivation and contact-initiated coagulation. N-glycosylated. In terms of processing, proteolytic cleavage produces several HRG fragments which are mostly disulfide-linked and, therefore, not released. On platelet activation, may release a 33 kDa antiangiogenic peptide which encompasses the HRR.

Its subcellular location is the secreted. In terms of biological role, plasma glycoprotein that binds a number of ligands such as heme, heparin, heparan sulfate, thrombospondin, plasminogen, and divalent metal ions. Inhibits rosette formation. Acts as an adapter protein and implicated in regulating many processes such as immune complex and pathogen clearance, cell adhesion, angiogenesis, coagulation and fibrinolysis. Mediates clearance of necrotic cells through enhancing the phagocytosis of necrotic cells in a heparan sulfate-dependent pathway. This process can be regulated by the presence of certain HRG ligands such as heparin and zinc ions. Binds to IgG subclasses of immunoglobins containing kappa and lambda light chains with different affinities regulating their clearance and inhibiting the formation of insoluble immune complexes. Tethers plasminogen to the cell surface. Binds T-cells and alters the cell morphology. Modulates angiogenesis by blocking the CD6-mediated antiangiongenic effect of thrombospondins, THBS1 and THBS2. This chain is Histidine-rich glycoprotein (HRG), found in Bos taurus (Bovine).